The following is a 484-amino-acid chain: Hexokinase-2 (484 aa).

Residues 21–467 form the Hexokinase domain; it reads PQLLEALKPI…SGVGAAVIAA (447 aa). The tract at residues 75-208 is hexokinase small subdomain; sequence TGKETGSYLA…GVPIDVVALI (134 aa). Residues 209-456 are hexokinase large subdomain; sequence NDTTGTLVAS…DPIIIVPAED (248 aa).

This sequence belongs to the hexokinase family. As to quaternary structure, monomer.

The protein localises to the cytoplasm. The catalysed reaction is a D-hexose + ATP = a D-hexose 6-phosphate + ADP + H(+). It catalyses the reaction D-fructose + ATP = D-fructose 6-phosphate + ADP + H(+). It carries out the reaction D-glucose + ATP = D-glucose 6-phosphate + ADP + H(+). Its pathway is carbohydrate metabolism; hexose metabolism. It functions in the pathway carbohydrate degradation; glycolysis; D-glyceraldehyde 3-phosphate and glycerone phosphate from D-glucose: step 1/4. Its function is as follows. Catalyzes the phosphorylation of hexose, such as D-glucose and D-fructose, to hexose 6-phosphate (D-glucose 6-phosphate and D-fructose 6-phosphate, respectively). Mediates the initial step of glycolysis by catalyzing phosphorylation of D-glucose to D-glucose 6-phosphate. The protein is Hexokinase-2 (HXK2) of Candida albicans (strain SC5314 / ATCC MYA-2876) (Yeast).